A 276-amino-acid polypeptide reads, in one-letter code: Palmitoyltransferase ZDHHC22 (276 aa).

Topologically, residues methionine 1–threonine 9 are cytoplasmic. Residues isoleucine 10–phenylalanine 30 form a helical membrane-spanning segment. At threonine 31–alanine 45 the chain is on the lumenal side. Residues methionine 46–methionine 66 form a helical membrane-spanning segment. Over threonine 67–tyrosine 131 the chain is Cytoplasmic. The DHHC domain occupies histidine 101–isoleucine 137. Cysteine 117 (S-palmitoyl cysteine intermediate) is an active-site residue. A helical transmembrane segment spans residues phenylalanine 132–alanine 152. Over tyrosine 153–proline 165 the chain is Lumenal. A helical membrane pass occupies residues leucine 166 to glycine 186. The Cytoplasmic portion of the chain corresponds to leucine 187–glutamine 188. A helical transmembrane segment spans residues phenylalanine 189–cysteine 209. Residues cysteine 210–aspartate 276 lie on the Lumenal side of the membrane.

The protein belongs to the DHHC palmitoyltransferase family.

It localises to the endoplasmic reticulum membrane. Its subcellular location is the golgi apparatus membrane. It catalyses the reaction L-cysteinyl-[protein] + hexadecanoyl-CoA = S-hexadecanoyl-L-cysteinyl-[protein] + CoA. Palmitoyltransferase that could catalyze the addition of palmitate onto various protein substrates and be involved in a variety of cellular processes. The chain is Palmitoyltransferase ZDHHC22 (zdhhc22) from Danio rerio (Zebrafish).